Consider the following 156-residue polypeptide: Endoribonuclease YbeY (156 aa).

His117, His121, and His127 together coordinate Zn(2+).

The protein belongs to the endoribonuclease YbeY family. Requires Zn(2+) as cofactor.

Its subcellular location is the cytoplasm. In terms of biological role, single strand-specific metallo-endoribonuclease involved in late-stage 70S ribosome quality control and in maturation of the 3' terminus of the 16S rRNA. This Herminiimonas arsenicoxydans protein is Endoribonuclease YbeY.